The primary structure comprises 427 residues: Adenylosuccinate synthetase (427 aa).

GTP-binding positions include 12–18 and 40–42; these read GDEGKGK and GHT. Catalysis depends on Asp13, which acts as the Proton acceptor. Mg(2+) is bound by residues Asp13 and Gly40. IMP is bound by residues 13 to 16, 38 to 41, Thr126, Arg140, Gln221, Thr236, and Arg299; these read DEGK and NAGH. Residue His41 is the Proton donor of the active site. Position 295–301 (295–301) interacts with substrate; it reads STTNRPR. Residues Arg301, 327 to 329, and 409 to 411 each bind GTP; these read KLD and SLG.

This sequence belongs to the adenylosuccinate synthetase family. In terms of assembly, homodimer. Mg(2+) serves as cofactor.

It is found in the cytoplasm. It carries out the reaction IMP + L-aspartate + GTP = N(6)-(1,2-dicarboxyethyl)-AMP + GDP + phosphate + 2 H(+). It functions in the pathway purine metabolism; AMP biosynthesis via de novo pathway; AMP from IMP: step 1/2. In terms of biological role, plays an important role in the de novo pathway of purine nucleotide biosynthesis. Catalyzes the first committed step in the biosynthesis of AMP from IMP. In Borrelia turicatae (strain 91E135), this protein is Adenylosuccinate synthetase.